Here is a 159-residue protein sequence, read N- to C-terminus: G-protein-signaling modulator 3 (159 aa).

The disordered stretch occupies residues 1-54 (MEAERPQEEDGEQSLPQDDQGWPPVNATARPWRSAPPSPPPPGTRHTALGPRSG). Residues Ser-34, Ser-38, Ser-55, and Ser-58 each carry the phosphoserine modification. Over residues 34–43 (SAPPSPPPPG) the composition is skewed to pro residues. Thr-61 carries the phosphothreonine modification. The 23-residue stretch at 61–83 (TELLLDLVAEAQSRRLEEQRATF) folds into the GoLoco 1 domain. The interval 77–97 (EEQRATFHTPEAPPNLAPAPP) is disordered. Residues 87 to 97 (EAPPNLAPAPP) are compositionally biased toward pro residues. 2 GoLoco domains span residues 103-125 (KEQL…RSDP) and 131-154 (GQEL…RSRP).

The protein localises to the cytoplasm. Functionally, interacts with subunit of G(i) alpha proteins and regulates the activation of G(i) alpha proteins. This is G-protein-signaling modulator 3 (Gpsm3) from Mus musculus (Mouse).